The primary structure comprises 335 residues: N-acetyl-gamma-glutamyl-phosphate reductase (335 aa).

The active site involves C147.

It belongs to the NAGSA dehydrogenase family. Type 1 subfamily.

The protein resides in the cytoplasm. The enzyme catalyses N-acetyl-L-glutamate 5-semialdehyde + phosphate + NADP(+) = N-acetyl-L-glutamyl 5-phosphate + NADPH + H(+). It functions in the pathway amino-acid biosynthesis; L-arginine biosynthesis; N(2)-acetyl-L-ornithine from L-glutamate: step 3/4. Catalyzes the NADPH-dependent reduction of N-acetyl-5-glutamyl phosphate to yield N-acetyl-L-glutamate 5-semialdehyde. The sequence is that of N-acetyl-gamma-glutamyl-phosphate reductase from Campylobacter hominis (strain ATCC BAA-381 / DSM 21671 / CCUG 45161 / LMG 19568 / NCTC 13146 / CH001A).